Here is a 471-residue protein sequence, read N- to C-terminus: Probable ribonuclease FAU-1 (471 aa).

Belongs to the FAU-1 family.

Functionally, probable RNase involved in rRNA stability through maturation and/or degradation of precursor rRNAs. Binds to RNA in loop regions with AU-rich sequences. The protein is Probable ribonuclease FAU-1 of Aeropyrum pernix (strain ATCC 700893 / DSM 11879 / JCM 9820 / NBRC 100138 / K1).